A 128-amino-acid polypeptide reads, in one-letter code: Glycine cleavage system H protein (128 aa).

Positions 25 to 107 (TITVGITHHA…YGAGWFFKIK (83 aa)) constitute a Lipoyl-binding domain. The residue at position 66 (K66) is an N6-lipoyllysine.

Belongs to the GcvH family. The glycine cleavage system is composed of four proteins: P, T, L and H. The cofactor is (R)-lipoate.

Functionally, the glycine cleavage system catalyzes the degradation of glycine. The H protein shuttles the methylamine group of glycine from the P protein to the T protein. This is Glycine cleavage system H protein from Neisseria meningitidis serogroup C (strain 053442).